A 350-amino-acid chain; its full sequence is E3 ubiquitin-protein ligase TRIM63 (350 aa).

An RING-type zinc finger spans residues 23-79; it reads CPICLEMFTKPVVILPCQHNLCRKCANDIFQAANPYWTNRGGSVSMSGGRFRCPSCR. Residues 74–218 form an interaction with TTN region; that stretch reads RCPSCRHEVI…LSQKFDTLYA (145 aa). The B box-type zinc finger occupies 117-159; it reads GSHPMCKEHEDEKINIYCLTCEVPTCSLCKVFGAHQACEVAPL. Residues Cys122, His125, Cys145, and His151 each contribute to the Zn(2+) site. A coiled-coil region spans residues 207–269; that stretch reads EELSQKFDTL…VETAIQSLDE (63 aa). One can recognise a COS domain in the interval 267 to 325; sequence LDEPGGATFLSSAKQLIKSNVEASKGCQLGKTEQGFENMDYFTLDLEHIAEALRAIDFG. Residues 325 to 344 show a composition bias toward acidic residues; sequence GTDEEEEEFTEEEADEEEGV. The segment at 325–350 is disordered; it reads GTDEEEEEFTEEEADEEEGVTTEGHQ.

In terms of assembly, homodimer. Homooligomer and heterooligomer. Interacts with SUMO2, titin/TTN and GMEB1. Interacts with TRIM54 and probably with TRIM55. Interacts with TNNI3. Forms a ternary complex with RACK1 and PRKCE. Interacts with CKM.

The protein localises to the cytoplasm. It is found in the nucleus. The protein resides in the myofibril. Its subcellular location is the sarcomere. It localises to the m line. The protein localises to the z line. It catalyses the reaction S-ubiquitinyl-[E2 ubiquitin-conjugating enzyme]-L-cysteine + [acceptor protein]-L-lysine = [E2 ubiquitin-conjugating enzyme]-L-cysteine + N(6)-ubiquitinyl-[acceptor protein]-L-lysine.. It participates in protein modification; protein ubiquitination. Functionally, E3 ubiquitin ligase. Mediates the ubiquitination and subsequent proteasomal degradation of CKM, GMEB1 and HIBADH. Regulates the proteasomal degradation of muscle proteins under amino acid starvation, where muscle protein is catabolized to provide other organs with amino acids. Inhibits de novo skeletal muscle protein synthesis under amino acid starvation. Regulates proteasomal degradation of cardiac troponin I/TNNI3 and probably of other sarcomeric-associated proteins. May play a role in striated muscle atrophy and hypertrophy by regulating an anti-hypertrophic PKC-mediated signaling pathway. May regulate the organization of myofibrils through TTN in muscle cells. This Mus musculus (Mouse) protein is E3 ubiquitin-protein ligase TRIM63 (Trim63).